A 128-amino-acid polypeptide reads, in one-letter code: Probable 4-amino-4-deoxy-L-arabinose-phosphoundecaprenol flippase subunit ArnF (128 aa).

The Cytoplasmic portion of the chain corresponds to 1–2 (MG). A helical membrane pass occupies residues 3 to 23 (LIWGLFSVIIASVAQLSLGFA). The Periplasmic segment spans residues 24 to 35 (ASHLPPMTHLWD). Residues 36-56 (FIAALLAFGLDARILLLGLLG) traverse the membrane as a helical segment. The Cytoplasmic segment spans residues 57-75 (YLLSVFCWYKTLHKLALSK). Residues 76–96 (AYALLSMSYVLVWIASMVLPG) form a helical membrane-spanning segment. Over 97–100 (REGT) the chain is Periplasmic. Residues 101 to 121 (FSLKALLGVACIMSGLMLIFL) traverse the membrane as a helical segment. Residues 122–128 (PTTKQRY) lie on the Cytoplasmic side of the membrane.

Belongs to the ArnF family. Heterodimer of ArnE and ArnF.

It localises to the cell inner membrane. The protein operates within bacterial outer membrane biogenesis; lipopolysaccharide biosynthesis. Its function is as follows. Translocates 4-amino-4-deoxy-L-arabinose-phosphoundecaprenol (alpha-L-Ara4N-phosphoundecaprenol) from the cytoplasmic to the periplasmic side of the inner membrane. The chain is Probable 4-amino-4-deoxy-L-arabinose-phosphoundecaprenol flippase subunit ArnF from Shigella flexneri serotype 5b (strain 8401).